The sequence spans 82 residues: MGGISIWQLLIIAVIIVLLFGTKKLRGVGSDLGSAVKGFKKAISEDESAKDAKKDADFVPQNLEKKEAETVEKQKQNDKEQA.

Residues 1–21 (MGGISIWQLLIIAVIIVLLFG) form a helical membrane-spanning segment. The disordered stretch occupies residues 48 to 82 (SAKDAKKDADFVPQNLEKKEAETVEKQKQNDKEQA).

Belongs to the TatA/E family. In terms of assembly, the Tat system comprises two distinct complexes: a TatABC complex, containing multiple copies of TatA, TatB and TatC subunits, and a separate TatA complex, containing only TatA subunits. Substrates initially bind to the TatABC complex, which probably triggers association of the separate TatA complex to form the active translocon.

The protein localises to the cell inner membrane. Functionally, part of the twin-arginine translocation (Tat) system that transports large folded proteins containing a characteristic twin-arginine motif in their signal peptide across membranes. TatA could form the protein-conducting channel of the Tat system. This is Sec-independent protein translocase protein TatA from Aliivibrio salmonicida (strain LFI1238) (Vibrio salmonicida (strain LFI1238)).